The following is a 285-amino-acid chain: Secreted LysM effector slp2 (285 aa).

Positions 1–16 (MLPITVVTLFAALAAA) are cleaved as a signal peptide. The disordered stretch occupies residues 75 to 143 (GDAAKAGDAA…KGGDAAKGGN (69 aa)). Residues 85-116 (KGGDAKGGDAKGGDAKGGDAKGGKGGDAKGGK) show a composition bias toward basic and acidic residues. The segment covering 117–139 (GGDAAKGGKGGDAAKGGKGGDAA) has biased composition (gly residues). 2 consecutive LysM domains span residues 157 to 201 (VEHK…VLKI) and 237 to 281 (FTRV…TINL).

The protein belongs to the secreted LysM effector family.

Its function is as follows. Might have a role in sequestration of chitin oligosaccharides (breakdown products of fungal cell walls that are released during invasion and act as triggers of host immunity) to dampen host defense. This chain is Secreted LysM effector slp2, found in Pyricularia oryzae (strain 70-15 / ATCC MYA-4617 / FGSC 8958) (Rice blast fungus).